The following is a 368-amino-acid chain: 4-hydroxy-3-methylbut-2-en-1-yl diphosphate synthase (flavodoxin) (368 aa).

[4Fe-4S] cluster contacts are provided by cysteine 271, cysteine 274, cysteine 306, and glutamate 313.

This sequence belongs to the IspG family. [4Fe-4S] cluster is required as a cofactor.

The enzyme catalyses (2E)-4-hydroxy-3-methylbut-2-enyl diphosphate + oxidized [flavodoxin] + H2O + 2 H(+) = 2-C-methyl-D-erythritol 2,4-cyclic diphosphate + reduced [flavodoxin]. Its pathway is isoprenoid biosynthesis; isopentenyl diphosphate biosynthesis via DXP pathway; isopentenyl diphosphate from 1-deoxy-D-xylulose 5-phosphate: step 5/6. Its function is as follows. Converts 2C-methyl-D-erythritol 2,4-cyclodiphosphate (ME-2,4cPP) into 1-hydroxy-2-methyl-2-(E)-butenyl 4-diphosphate. The polypeptide is 4-hydroxy-3-methylbut-2-en-1-yl diphosphate synthase (flavodoxin) (Buchnera aphidicola subsp. Acyrthosiphon pisum (strain APS) (Acyrthosiphon pisum symbiotic bacterium)).